A 609-amino-acid chain; its full sequence is WD repeat-containing protein 1 (609 aa).

13 WD repeats span residues 6–47 (EIKK…IRNI), 50–89 (PAIA…IWDT), 95–137 (LLKY…LWDS), 140–178 (SVGE…FFEG), 182–220 (KFKF…IYDG), 226–265 (VCAL…IWDV), 272–308 (STFN…YLDK), 313–353 (KPLR…YWDS), 360–410 (GFSG…KMDV), 434–476 (MKDK…LYSI), 482–520 (KSDD…VFSV), 525–563 (VEHN…VWTV), and 568–606 (TRIK…EWSI).

This sequence belongs to the WD repeat AIP1 family.

Its subcellular location is the cytoplasm. It localises to the cytoskeleton. In terms of biological role, induces disassembly of actin filaments in conjunction with ADF/cofilin family proteins. Enhances cofilin-mediated actin severing. The sequence is that of WD repeat-containing protein 1 (WDR1) from Gallus gallus (Chicken).